Reading from the N-terminus, the 209-residue chain is Large ribosomal subunit protein uL3 (209 aa).

It belongs to the universal ribosomal protein uL3 family. In terms of assembly, part of the 50S ribosomal subunit. Forms a cluster with proteins L14 and L19.

Functionally, one of the primary rRNA binding proteins, it binds directly near the 3'-end of the 23S rRNA, where it nucleates assembly of the 50S subunit. This chain is Large ribosomal subunit protein uL3, found in Pelobacter propionicus (strain DSM 2379 / NBRC 103807 / OttBd1).